The primary structure comprises 114 residues: Cytochrome c2 (114 aa).

Gln1 carries the pyrrolidone carboxylic acid modification. 4 residues coordinate heme c: Cys13, Cys16, His17, and Met93.

The protein belongs to the cytochrome c family. In terms of processing, binds 1 heme c group covalently per subunit.

The protein resides in the periplasm. Functionally, cytochrome c2 is found mainly in purple, non-sulfur, photosynthetic bacteria where it functions as the electron donor to the oxidized bacteriochlorophyll in the photophosphorylation pathway. However, it may also have a role in the respiratory chain and is found in some non-photosynthetic bacteria. The protein is Cytochrome c2 of Rhodopseudomonas palustris.